The primary structure comprises 423 residues: Probable sucrose-phosphatase 3b (423 aa).

Belongs to the sucrose phosphatase family. Homodimer. It depends on Mg(2+) as a cofactor.

It catalyses the reaction sucrose 6(F)-phosphate + H2O = sucrose + phosphate. It functions in the pathway glycan biosynthesis; sucrose biosynthesis; sucrose from D-fructose 6-phosphate and UDP-alpha-D-glucose: step 2/2. In terms of biological role, catalyzes the final step of sucrose synthesis. The sequence is that of Probable sucrose-phosphatase 3b (SPP3B) from Arabidopsis thaliana (Mouse-ear cress).